Reading from the N-terminus, the 93-residue chain is Small ribosomal subunit protein bS18 (93 aa).

It belongs to the bacterial ribosomal protein bS18 family. As to quaternary structure, part of the 30S ribosomal subunit. Forms a tight heterodimer with protein bS6.

Functionally, binds as a heterodimer with protein bS6 to the central domain of the 16S rRNA, where it helps stabilize the platform of the 30S subunit. In Verminephrobacter eiseniae (strain EF01-2), this protein is Small ribosomal subunit protein bS18.